Reading from the N-terminus, the 440-residue chain is uncharacterized protein (440 aa).

The first 19 residues, 1–19 (MKKLLLAASIVYFASACLA), serve as a signal peptide directing secretion.

This is an uncharacterized protein from Rickettsia prowazekii (strain Madrid E).